The chain runs to 562 residues: DNA ligase (562 aa).

Glu252 serves as a coordination point for ATP. Lys254 (N6-AMP-lysine intermediate) is an active-site residue. Residues Arg259, Arg274, Glu303, Phe343, Arg419, and Lys425 each contribute to the ATP site.

Belongs to the ATP-dependent DNA ligase family. It depends on Mg(2+) as a cofactor.

The catalysed reaction is ATP + (deoxyribonucleotide)n-3'-hydroxyl + 5'-phospho-(deoxyribonucleotide)m = (deoxyribonucleotide)n+m + AMP + diphosphate.. Functionally, DNA ligase that seals nicks in double-stranded DNA during DNA replication, DNA recombination and DNA repair. The protein is DNA ligase of Methanococcus aeolicus (strain ATCC BAA-1280 / DSM 17508 / OCM 812 / Nankai-3).